The primary structure comprises 504 residues: Probable cytosol aminopeptidase (504 aa).

Mn(2+) contacts are provided by Lys263 and Asp268. The active site involves Lys275. Mn(2+)-binding residues include Asp286, Asp345, and Glu347. Arg349 is a catalytic residue.

This sequence belongs to the peptidase M17 family. It depends on Mn(2+) as a cofactor.

Its subcellular location is the cytoplasm. The enzyme catalyses Release of an N-terminal amino acid, Xaa-|-Yaa-, in which Xaa is preferably Leu, but may be other amino acids including Pro although not Arg or Lys, and Yaa may be Pro. Amino acid amides and methyl esters are also readily hydrolyzed, but rates on arylamides are exceedingly low.. It catalyses the reaction Release of an N-terminal amino acid, preferentially leucine, but not glutamic or aspartic acids.. Its function is as follows. Presumably involved in the processing and regular turnover of intracellular proteins. Catalyzes the removal of unsubstituted N-terminal amino acids from various peptides. This is Probable cytosol aminopeptidase from Sulfurihydrogenibium sp. (strain YO3AOP1).